We begin with the raw amino-acid sequence, 275 residues long: Large ribosomal subunit protein uL2c (275 aa).

Residues 219-254 are disordered; it reads TVRGSVMNPCDHPHGGGEGRAPIGRTRPLTPWGKPA.

Belongs to the universal ribosomal protein uL2 family. As to quaternary structure, part of the 50S ribosomal subunit.

It localises to the plastid. The protein localises to the chloroplast. This Phaeodactylum tricornutum (strain CCAP 1055/1) protein is Large ribosomal subunit protein uL2c (rpl2).